Here is a 157-residue protein sequence, read N- to C-terminus: 2-C-methyl-D-erythritol 2,4-cyclodiphosphate synthase (157 aa).

D8 and H10 together coordinate a divalent metal cation. 4-CDP-2-C-methyl-D-erythritol 2-phosphate-binding positions include 8-10 and 34-35; these read DVH and HS. Position 42 (H42) interacts with a divalent metal cation. Residues 56–58, 61–65, 100–106, 132–135, F139, and R142 each bind 4-CDP-2-C-methyl-D-erythritol 2-phosphate; these read DIG, FPDTD, AQAPKMA, and TTTE.

Belongs to the IspF family. As to quaternary structure, homotrimer. The cofactor is a divalent metal cation.

The enzyme catalyses 4-CDP-2-C-methyl-D-erythritol 2-phosphate = 2-C-methyl-D-erythritol 2,4-cyclic diphosphate + CMP. The protein operates within isoprenoid biosynthesis; isopentenyl diphosphate biosynthesis via DXP pathway; isopentenyl diphosphate from 1-deoxy-D-xylulose 5-phosphate: step 4/6. Functionally, involved in the biosynthesis of isopentenyl diphosphate (IPP) and dimethylallyl diphosphate (DMAPP), two major building blocks of isoprenoid compounds. Catalyzes the conversion of 4-diphosphocytidyl-2-C-methyl-D-erythritol 2-phosphate (CDP-ME2P) to 2-C-methyl-D-erythritol 2,4-cyclodiphosphate (ME-CPP) with a corresponding release of cytidine 5-monophosphate (CMP). In Pseudomonas fluorescens (strain Pf0-1), this protein is 2-C-methyl-D-erythritol 2,4-cyclodiphosphate synthase.